The primary structure comprises 198 residues: Translation initiation factor IF-3 (198 aa).

The interval 168-198 is disordered; it reads SLAPKKAGSPKKAETDTAKKENPKKAVETKE. Residues 178–198 are compositionally biased toward basic and acidic residues; it reads KKAETDTAKKENPKKAVETKE.

It belongs to the IF-3 family. As to quaternary structure, monomer.

Its subcellular location is the cytoplasm. IF-3 binds to the 30S ribosomal subunit and shifts the equilibrium between 70S ribosomes and their 50S and 30S subunits in favor of the free subunits, thus enhancing the availability of 30S subunits on which protein synthesis initiation begins. In Phocaeicola vulgatus (strain ATCC 8482 / DSM 1447 / JCM 5826 / CCUG 4940 / NBRC 14291 / NCTC 11154) (Bacteroides vulgatus), this protein is Translation initiation factor IF-3.